The following is a 463-amino-acid chain: ATP-dependent protease ATPase subunit HslU (463 aa).

ATP contacts are provided by residues Ile19 and 61 to 66 (GVGKTE). Residues 154 to 175 (FGGNQNSNQTSDAQEDDEIEKK) form a disordered region. Residues 156–165 (GNQNSNQTSD) are compositionally biased toward polar residues. ATP-binding residues include Asp277, Glu341, and Arg413.

This sequence belongs to the ClpX chaperone family. HslU subfamily. A double ring-shaped homohexamer of HslV is capped on each side by a ring-shaped HslU homohexamer. The assembly of the HslU/HslV complex is dependent on binding of ATP.

Its subcellular location is the cytoplasm. Functionally, ATPase subunit of a proteasome-like degradation complex; this subunit has chaperone activity. The binding of ATP and its subsequent hydrolysis by HslU are essential for unfolding of protein substrates subsequently hydrolyzed by HslV. HslU recognizes the N-terminal part of its protein substrates and unfolds these before they are guided to HslV for hydrolysis. This is ATP-dependent protease ATPase subunit HslU from Bacillus mycoides (strain KBAB4) (Bacillus weihenstephanensis).